The chain runs to 1064 residues: Adenylate cyclase type 4 (1064 aa).

Topologically, residues 1–28 (MARLFSPRPPPSEDLFYETYYSLSQQYP) are cytoplasmic. A run of 6 helical transmembrane segments spans residues 29 to 50 (LLIL…VAWA), 61 to 80 (FLTT…GLAS), 94 to 117 (GLIW…VSAW), 120 to 138 (VSFF…PLGM), 141 to 162 (AAAA…YLGW), and 170 to 190 (LLPQ…VGAY). Over 191–582 (HKALMERALR…YRLSALPAFK (392 aa)) the chain is Cytoplasmic. Mg(2+) is bound by residues aspartate 278, isoleucine 279, and aspartate 322. ATP-binding positions include 278-283 (DIVGFT), 320-322 (LGD), and arginine 366. Residues 498–523 (DSPASTSTPLPEKAFSPQWSLDRSRT) are disordered. Serine 517 is modified (phosphoserine). Threonine 533 bears the Phosphothreonine mark. Helical transmembrane passes span 583–604 (YYAA…LVTT), 608–630 (ALAT…CFSE), and 661–684 (VALG…FLPV). Over 685-707 (SSDCPFLAPNVSSVAFNTSWELP) the chain is Extracellular. Asparagine 694 and asparagine 701 each carry an N-linked (GlcNAc...) asparagine glycan. Transmembrane regions (helical) follow at residues 708–733 (ASLP…SLFL), 741–761 (LLLL…SHAW), and 788–804 (MGAI…LVLA). At 805–1064 (RQNEYYCRLD…LTRTGSPSAS (260 aa)) the chain is on the cytoplasmic side. Residues lysine 914, 994 to 996 (DIW), 1001 to 1005 (NVASR), and lysine 1041 each bind ATP.

This sequence belongs to the adenylyl cyclase class-4/guanylyl cyclase family. Mg(2+) is required as a cofactor. Requires Mn(2+) as cofactor. In terms of tissue distribution, widely distributed.

The protein localises to the cell membrane. It is found in the cytoplasm. It carries out the reaction ATP = 3',5'-cyclic AMP + diphosphate. Activated by forskolin. Insensitive to calcium/calmodulin. Stimulated by GNAS and by the G-protein beta and gamma subunit complex. Functionally, catalyzes the formation of the signaling molecule cAMP in response to G-protein signaling. The protein is Adenylate cyclase type 4 (Adcy4) of Rattus norvegicus (Rat).